Here is a 688-residue protein sequence, read N- to C-terminus: Glycine--tRNA ligase beta subunit (688 aa).

It belongs to the class-II aminoacyl-tRNA synthetase family. Tetramer of two alpha and two beta subunits.

It is found in the cytoplasm. It catalyses the reaction tRNA(Gly) + glycine + ATP = glycyl-tRNA(Gly) + AMP + diphosphate. The chain is Glycine--tRNA ligase beta subunit from Listeria monocytogenes serovar 1/2a (strain ATCC BAA-679 / EGD-e).